A 1796-amino-acid chain; its full sequence is Non-reducing polyketide synthase nscA (1796 aa).

The segment at 18-256 (DDLKDLFRRL…PLPVYDGLCH (239 aa)) is N-terminal acylcarrier protein transacylase domain (SAT). Residues 392–825 (SSKLAIVGMA…GGNTTLLLED (434 aa)) enclose the Ketosynthase family 3 (KS3) domain. Catalysis depends on for beta-ketoacyl synthase activity residues Cys565, His700, and His743. Residues 931–1251 (FTGQGAYYSG…SLVTLHLAGL (321 aa)) are malonyl-CoA:ACP transacylase (MAT) domain. The segment at 1317 to 1636 (TSLVHQITAE…RLLMDRFFSP (320 aa)) is product template (PT) domain. Positions 1321-1457 (HQITAETVEA…ATVRFEDPVA (137 aa)) are N-terminal hotdog fold. Residues 1321–1631 (HQITAETVEA…FRRVPRLLMD (311 aa)) enclose the PKS/mFAS DH domain. His1353 serves as the catalytic Proton acceptor; for dehydratase activity. The tract at residues 1485–1631 (ASRLSKPLAY…FRRVPRLLMD (147 aa)) is C-terminal hotdog fold. Asp1542 acts as the Proton donor; for dehydratase activity in catalysis. Residues 1688–1720 (TPESTPPLAPSSESSTPKESPIATPPESERADP) form a disordered region. The segment covering 1697–1708 (PSSESSTPKESP) has biased composition (low complexity). The 78-residue stretch at 1719–1796 (DPMDNMVSQC…EMTAWIEEYC (78 aa)) folds into the Carrier domain. Position 1756 is an O-(pantetheine 4'-phosphoryl)serine (Ser1756).

It depends on pantetheine 4'-phosphate as a cofactor.

The protein operates within secondary metabolite biosynthesis. Functionally, non-reducing polyketide synthase; part of the gene cluster that mediates the biosynthesis of neosartoricin B, a prenylated anthracenone that probably exhibits T-cell antiproliferative activity, suggestive of a physiological role as an immunosuppressive agent. The non-reducing polyketide synthase nscA probably synthesizes and cyclizes the decaketide backbone. The hydrolase nscB then mediates the product release through hydrolysis followed by spontaneous decarboxylation. The prenyltransferase nscD catalyzes the addition of the dimethylallyl group to the aromatic C5. The FAD-dependent monooxygenase nscC is then responsible for the stereospecific hydroxylation at C2. Neosartoricin B can be converted into two additional compounds neosartoricins C and D. Neosartoricin C is a spirocyclic compound that is cyclized through the attack of C3 hydroxyl on C14, followed by dehydration. On the other hand, neosartoricin D is a further cyclized compound in which attack of C2 on C14 in neosartoricin C results in the formation of the acetal-containing dioxabicyclo-octanone ring. Both of these compounds are novel and possibly represent related metabolites of the gene cluster. This chain is Non-reducing polyketide synthase nscA, found in Arthroderma otae (strain ATCC MYA-4605 / CBS 113480) (Microsporum canis).